An 86-amino-acid polypeptide reads, in one-letter code: Large ribosomal subunit protein bL31 (86 aa).

The tract at residues 65 to 86 (YGMGSANSATSKEQKEEKDSNK) is disordered. Residues 76-86 (KEQKEEKDSNK) are compositionally biased toward basic and acidic residues.

This sequence belongs to the bacterial ribosomal protein bL31 family. Type A subfamily. Part of the 50S ribosomal subunit.

Binds the 23S rRNA. The chain is Large ribosomal subunit protein bL31 from Prochlorococcus marinus (strain MIT 9312).